We begin with the raw amino-acid sequence, 270 residues long: Probable aquaporin NIP-type (270 aa).

Transmembrane regions (helical) follow at residues 45–65 (LIAE…SVAV) and 72–92 (VTFP…VYTV). The NPA 1 motif lies at 101 to 103 (NPA). Transmembrane regions (helical) follow at residues 121–141 (LYII…ALLF), 160–180 (SLAI…GVAT), and 188–208 (VAGI…GPIS). The short motif at 213-215 (NPA) is the NPA 2 element. A helical membrane pass occupies residues 231-251 (WVYVVGPIIGTLAGAFVYNLI).

It belongs to the MIP/aquaporin (TC 1.A.8) family. NIP (TC 1.A.8.12) subfamily. In terms of tissue distribution, pollen specific.

It localises to the membrane. Its function is as follows. Aquaporins facilitate the transport of water and small neutral solutes across cell membranes. The polypeptide is Probable aquaporin NIP-type (Nicotiana alata (Winged tobacco)).